Reading from the N-terminus, the 255-residue chain is Triosephosphate isomerase (255 aa).

9-11 provides a ligand contact to substrate; sequence NWK. The active-site Electrophile is His95. Glu167 serves as the catalytic Proton acceptor. Substrate-binding positions include Gly173, Ser212, and 233–234; that span reads GG.

Belongs to the triosephosphate isomerase family. In terms of assembly, homodimer.

Its subcellular location is the cytoplasm. The enzyme catalyses D-glyceraldehyde 3-phosphate = dihydroxyacetone phosphate. It functions in the pathway carbohydrate biosynthesis; gluconeogenesis. Its pathway is carbohydrate degradation; glycolysis; D-glyceraldehyde 3-phosphate from glycerone phosphate: step 1/1. Its function is as follows. Involved in the gluconeogenesis. Catalyzes stereospecifically the conversion of dihydroxyacetone phosphate (DHAP) to D-glyceraldehyde-3-phosphate (G3P). This Enterobacter cloacae protein is Triosephosphate isomerase.